The chain runs to 206 residues: MARYLGPKLKLSRREGTDLFLKSGVRAIDSKCKLETAPGQHGARKTRLSEYGVQLREKQKVRRTYGVLEKQFRNYYKDAARTKGNTGENLLTLLETRLDNVVYRMGFGATRAEARQLVSHKSIMVNGSVVNIPSFKVSANDVISIREKSKKQARIIAALEVSSQREKPTWVEVDNTKMEGAFKRLPERSDLSAEINEQLIVELYSK.

Residues Thr96–Ile156 enclose the S4 RNA-binding domain.

This sequence belongs to the universal ribosomal protein uS4 family. Part of the 30S ribosomal subunit. Contacts protein S5. The interaction surface between S4 and S5 is involved in control of translational fidelity.

One of the primary rRNA binding proteins, it binds directly to 16S rRNA where it nucleates assembly of the body of the 30S subunit. Its function is as follows. With S5 and S12 plays an important role in translational accuracy. The sequence is that of Small ribosomal subunit protein uS4 from Shewanella woodyi (strain ATCC 51908 / MS32).